The primary structure comprises 471 residues: 3-isopropylmalate dehydratase large subunit (471 aa).

C347, C407, and C410 together coordinate [4Fe-4S] cluster.

Belongs to the aconitase/IPM isomerase family. LeuC type 1 subfamily. As to quaternary structure, heterodimer of LeuC and LeuD. Requires [4Fe-4S] cluster as cofactor.

It catalyses the reaction (2R,3S)-3-isopropylmalate = (2S)-2-isopropylmalate. Its pathway is amino-acid biosynthesis; L-leucine biosynthesis; L-leucine from 3-methyl-2-oxobutanoate: step 2/4. Functionally, catalyzes the isomerization between 2-isopropylmalate and 3-isopropylmalate, via the formation of 2-isopropylmaleate. The sequence is that of 3-isopropylmalate dehydratase large subunit from Edwardsiella ictaluri (strain 93-146).